Reading from the N-terminus, the 574-residue chain is Tyrosinase (574 aa).

Positions 67, 95, 104, 275, 279, and 304 each coordinate Cu cation. A cross-link (2'-(S-cysteinyl)-histidine (Cys-His)) is located at residues 93-95 (CTH).

The protein belongs to the tyrosinase family. It depends on Cu(2+) as a cofactor.

The enzyme catalyses 2 L-dopa + O2 = 2 L-dopaquinone + 2 H2O. The catalysed reaction is L-tyrosine + O2 = L-dopaquinone + H2O. Functionally, this is a copper-containing oxidase that functions in the formation of pigments such as melanins and other polyphenolic compounds. This chain is Tyrosinase (TYR), found in Podospora anserina (Pleurage anserina).